The primary structure comprises 214 residues: Large ribosomal subunit protein uL1 (214 aa).

It belongs to the universal ribosomal protein uL1 family. As to quaternary structure, component of the large ribosomal subunit.

Its subcellular location is the cytoplasm. Its function is as follows. Component of the large ribosomal subunit. The ribosome is a large ribonucleoprotein complex responsible for the synthesis of proteins in the cell. This Entamoeba histolytica (strain ATCC 30459 / HM-1:IMSS / ABRM) protein is Large ribosomal subunit protein uL1 (RPL10A).